Consider the following 567-residue polypeptide: MKIAKGLVGLLILYKNVCQVLCKSGSSVKSGSPWSIKNDGKSIIHDTLNSSYSDIENLNSRVSPLLFDLTEKSDYMRFYRLNLFNKECRYNLDDNVACGSSACNVLVTDEQDVPEVWSSKSLGKLEGFMPELSRQIVETDRSVMEHVDKISQSCLLERLDDEAHQYCYVDNELDSGCVYVSLLENPERFTGYSGPHSTRIWEMIYNQCLPDSSAPTIDFPALFMQGPLAPPPKPQEQLLKERMDAWTLEQRVFYRVLSGMHSSISTHLCHGYLNQRNGVWGPNLQCFQEKVLNYPERLENLYFAYALMQRAIDKLYGHLDSLTFCHDSVLQDSEVRQKIAGLVSLIHNSPKMFDETMLFAGDPSISTALKEDFREHFKTVSALMDCVGCERCRLWGKIQTNGFGTALKILFEVSNIEDEVTNFDSRSFSLRLRRSEIVALINTFDRLSRSINFVDDFKQIYSEQHKPASFKRRVLRRIKQLLFSVTPVALHPFLQKTSSILVDLYFDFKAEWDNVMLGFRYVFASYLRFPRLFKFVLFSQESPFLNWTSHHLQRYIPKNWFPEVASV.

Positions 1-22 (MKIAKGLVGLLILYKNVCQVLC) are cleaved as a signal peptide. Asn-49 carries an N-linked (GlcNAc...) asparagine glycan. 4 disulfides stabilise this stretch: Cys-88–Cys-386, Cys-98–Cys-103, Cys-154–Cys-325, and Cys-389–Cys-392. The FAD site is built by Arg-188, Thr-190, Trp-201, Ser-258, His-261, and Lys-290. Cys-389 serves as the catalytic Nucleophile. Cys-392 is an active-site residue. A glycan (N-linked (GlcNAc...) asparagine) is linked at Asn-546.

The protein belongs to the EROs family. In terms of assembly, may function both as a monomer and a homodimer. It depends on FAD as a cofactor. N-glycosylated.

The protein resides in the endoplasmic reticulum membrane. Essential oxidoreductase that oxidizes proteins in the endoplasmic reticulum to produce disulfide bonds. Acts by oxidizing directly pdi1 isomerase through a direct disulfide exchange. Does not act as a direct oxidant of folding substrate, but relies on pdi1 to transfer oxidizing equivalent. Does not oxidize all pdi related proteins, suggesting that it can discriminate between pdi1 and related proteins. Its reoxidation probably involves electron transfer to molecular oxygen via FAD. Acts independently of glutathione. May be responsible for a significant proportion of reactive oxygen species (ROS) in the cell, thereby being a source of oxidative stress. The protein is ERO1-like protein 2 (ero12) of Schizosaccharomyces pombe (strain 972 / ATCC 24843) (Fission yeast).